Here is a 250-residue protein sequence, read N- to C-terminus: DNA polymerase sliding clamp (250 aa).

This sequence belongs to the PCNA family. In terms of assembly, homotrimer. The subunits circularize to form a toroid; DNA passes through its center. Replication factor C (RFC) is required to load the toroid on the DNA.

Functionally, sliding clamp subunit that acts as a moving platform for DNA processing. Responsible for tethering the catalytic subunit of DNA polymerase and other proteins to DNA during high-speed replication. This chain is DNA polymerase sliding clamp, found in Methanococcus maripaludis (strain C7 / ATCC BAA-1331).